The chain runs to 427 residues: Mitochondrial distribution and morphology protein 12 (427 aa).

The 387-residue stretch at 1–387 folds into the SMP-LTD domain; that stretch reads MSFDINWNQL…WPSWICIDMN (387 aa). Positions 81-96 are enriched in basic and acidic residues; the sequence is NDSKDEHLKNHGDGIN. Disordered regions lie at residues 81–168 and 387–427; these read NDSK…APPL and NDDD…EAGE. A compositionally biased stretch (acidic residues) spans 106 to 133; it reads LDDEDEDDEDDDEDDEDEEEEDEDDYDD. The span at 146 to 161 shows a compositional bias: polar residues; it reads LNFNENSTTPSANSFA. A compositionally biased stretch (acidic residues) spans 387–402; that stretch reads NDDDDEEEEEESEDND. The span at 411–427 shows a compositional bias: basic and acidic residues; that stretch reads NDGKHGDGRTDETEAGE.

The protein belongs to the MDM12 family. In terms of assembly, component of the ER-mitochondria encounter structure (ERMES) or MDM complex, composed of MMM1, MDM10, MDM12 and MDM34. An MMM1 homodimer associates with one molecule of MDM12 on each side in a pairwise head-to-tail manner, and the SMP-LTD domains of MMM1 and MDM12 generate a continuous hydrophobic tunnel for phospholipid trafficking.

It localises to the mitochondrion outer membrane. Its subcellular location is the endoplasmic reticulum membrane. Functionally, component of the ERMES/MDM complex, which serves as a molecular tether to connect the endoplasmic reticulum (ER) and mitochondria. Components of this complex are involved in the control of mitochondrial shape and protein biogenesis, and function in nonvesicular lipid trafficking between the ER and mitochondria. MDM12 is required for the interaction of the ER-resident membrane protein MMM1 and the outer mitochondrial membrane-resident beta-barrel protein MDM10. The MDM12-MMM1 subcomplex functions in the major beta-barrel assembly pathway that is responsible for biogenesis of all mitochondrial outer membrane beta-barrel proteins, and acts in a late step after the SAM complex. The MDM10-MDM12-MMM1 subcomplex further acts in the TOM40-specific pathway after the action of the MDM12-MMM1 complex. Essential for establishing and maintaining the structure of mitochondria and maintenance of mtDNA nucleoids. The chain is Mitochondrial distribution and morphology protein 12 from Candida albicans (strain WO-1) (Yeast).